Here is a 356-residue protein sequence, read N- to C-terminus: Tyrosine recombinase XerS (356 aa).

A Core-binding (CB) domain is found at 16–121; it reads IMPWYVLDYY…ALSSLYKYLT (106 aa). The 186-residue stretch at 169–354 folds into the Tyr recombinase domain; the sequence is AFLDYVDKEY…VNDEQKNALD (186 aa). Residues arginine 210, lysine 234, histidine 306, arginine 309, and histidine 332 contribute to the active site. Tyrosine 341 serves as the catalytic O-(3'-phospho-DNA)-tyrosine intermediate.

It belongs to the 'phage' integrase family. XerS subfamily.

It is found in the cytoplasm. Its activity is regulated as follows. FtsK is required for recombination. Its function is as follows. Site-specific tyrosine recombinase, which acts by catalyzing the cutting and rejoining of the recombining DNA molecules. Essential to convert dimers of the bacterial chromosome into monomers to permit their segregation at cell division. The polypeptide is Tyrosine recombinase XerS (Streptococcus pyogenes serotype M18 (strain MGAS8232)).